Here is a 338-residue protein sequence, read N- to C-terminus: Malate dehydrogenase, mitochondrial (338 aa).

The N-terminal 24 residues, 1 to 24, are a transit peptide targeting the mitochondrion; it reads MLSALARPAGAALRRSFSTSXQNN. Residues 31–37 and Asp-57 each bind NAD(+); that span reads GASGGIG. Ser-33 is a glycosylation site (O-linked (GlcNAc) serine). An N6-acetyllysine; alternate mark is found at Lys-78 and Lys-91. 2 positions are modified to N6-succinyllysine; alternate: Lys-78 and Lys-91. Residues Arg-104 and Arg-110 each contribute to the substrate site. NAD(+) is bound by residues Asn-117 and 140 to 142; that span reads ISN. A substrate-binding site is contributed by Asn-142. Lys-165 bears the N6-acetyllysine mark. Position 176 (Arg-176) interacts with substrate. Lys-185 is modified (N6-acetyllysine; alternate). Lys-185 carries the post-translational modification N6-succinyllysine; alternate. His-200 serves as the catalytic Proton acceptor. At Lys-203 the chain carries N6-succinyllysine. N6-acetyllysine; alternate occurs at positions 215 and 239. 2 positions are modified to N6-succinyllysine; alternate: Lys-215 and Lys-239. Position 239 is an N6-malonyllysine; alternate (Lys-239). At Ser-246 the chain carries Phosphoserine. Residue Met-251 coordinates NAD(+). The residue at position 269 (Lys-269) is an N6-succinyllysine. Lys-296, Lys-301, Lys-307, Lys-314, and Lys-324 each carry N6-acetyllysine; alternate. N6-succinyllysine; alternate is present on residues Lys-296, Lys-301, Lys-307, Lys-314, and Lys-324. Residue Lys-307 is modified to N6-malonyllysine; alternate. Ser-326 is subject to Phosphoserine. 3 positions are modified to N6-acetyllysine; alternate: Lys-328, Lys-329, and Lys-335. Lys-328 is modified (N6-succinyllysine; alternate). N6-malonyllysine; alternate is present on Lys-329. Lys-335 carries the N6-succinyllysine; alternate modification.

Belongs to the LDH/MDH superfamily. MDH type 1 family. Homodimer. In terms of processing, acetylation is enhanced after treatment either with trichostin A (TCA) or with nicotinamide (NAM) with the appearance of tri- and tetraacetylations. Glucose also increases acetylation.

The protein resides in the mitochondrion matrix. The enzyme catalyses (S)-malate + NAD(+) = oxaloacetate + NADH + H(+). Its activity is regulated as follows. Enzyme activity is enhanced by acetylation. This chain is Malate dehydrogenase, mitochondrial (MDH2), found in Sus scrofa (Pig).